The following is a 131-amino-acid chain: Large ribosomal subunit protein bL12 (131 aa).

Belongs to the bacterial ribosomal protein bL12 family. In terms of assembly, homodimer. Part of the ribosomal stalk of the 50S ribosomal subunit. Forms a multimeric L10(L12)X complex, where L10 forms an elongated spine to which 2 to 4 L12 dimers bind in a sequential fashion. Binds GTP-bound translation factors.

Functionally, forms part of the ribosomal stalk which helps the ribosome interact with GTP-bound translation factors. Is thus essential for accurate translation. The chain is Large ribosomal subunit protein bL12 from Parasynechococcus marenigrum (strain WH8102).